Reading from the N-terminus, the 976-residue chain is 5'-3' exoribonuclease 2 homolog (976 aa).

A CCHC-type zinc finger spans residues 264 to 281 (RACELCGQYGHELKECRG). Basic and acidic residues predominate over residues 411–420 (DEERFKENQK). The segment at 411–442 (DEERFKENQKNKKARMQQYGRGRGGRGRGRGQ) is disordered. Residues 535–788 (DIRLYESGWK…GICVLYEDPE (254 aa)) are interaction with paxt-1. A disordered region spans residues 815-976 (WNERRDGRFN…GGYQGNSSWR (162 aa)). Positions 856–866 (DRQGGNDNYRG) are enriched in low complexity.

It belongs to the 5'-3' exonuclease family. XRN2/RAT1 subfamily. Interacts with paxt-1 (via N-terminus); the interaction is direct and results in stabilization of xrn-2 in the complex.

It localises to the nucleus. Possesses 5'-&gt;3' exoribonuclease activity. Plays a role in maintenance of steady-state concentration and turnover of microRNAs (miRNA) by degradation of mature miRNA. Degradation role is enhanced when in complex with paxt-1. Partially redundant to xrn-1 in miRNA guide strand degradation. Implicated in differential regulation of mRNAs such as let-7 by controlling the accumulation of mature miRNA. Positively regulates molting of the pharyngeal cuticle. The chain is 5'-3' exoribonuclease 2 homolog from Caenorhabditis briggsae.